Consider the following 339-residue polypeptide: Phosphoribosylformylglycinamidine cyclo-ligase (339 aa).

It belongs to the AIR synthase family.

The protein localises to the cytoplasm. It carries out the reaction 2-formamido-N(1)-(5-O-phospho-beta-D-ribosyl)acetamidine + ATP = 5-amino-1-(5-phospho-beta-D-ribosyl)imidazole + ADP + phosphate + H(+). It functions in the pathway purine metabolism; IMP biosynthesis via de novo pathway; 5-amino-1-(5-phospho-D-ribosyl)imidazole from N(2)-formyl-N(1)-(5-phospho-D-ribosyl)glycinamide: step 2/2. The sequence is that of Phosphoribosylformylglycinamidine cyclo-ligase from Streptococcus thermophilus (strain ATCC BAA-491 / LMD-9).